We begin with the raw amino-acid sequence, 90 residues long: DNA-directed RNA polymerase subunit Rpo5 (90 aa).

It belongs to the archaeal Rpo5/eukaryotic RPB5 RNA polymerase subunit family. Part of the RNA polymerase complex.

The protein resides in the cytoplasm. It carries out the reaction RNA(n) + a ribonucleoside 5'-triphosphate = RNA(n+1) + diphosphate. Its function is as follows. DNA-dependent RNA polymerase (RNAP) catalyzes the transcription of DNA into RNA using the four ribonucleoside triphosphates as substrates. The protein is DNA-directed RNA polymerase subunit Rpo5 of Aeropyrum pernix (strain ATCC 700893 / DSM 11879 / JCM 9820 / NBRC 100138 / K1).